The primary structure comprises 239 residues: Ubiquinone biosynthesis O-methyltransferase (239 aa).

Residues arginine 44, glycine 63, aspartate 84, and methionine 128 each contribute to the S-adenosyl-L-methionine site.

Belongs to the methyltransferase superfamily. UbiG/COQ3 family.

The catalysed reaction is a 3-demethylubiquinol + S-adenosyl-L-methionine = a ubiquinol + S-adenosyl-L-homocysteine + H(+). It catalyses the reaction a 3-(all-trans-polyprenyl)benzene-1,2-diol + S-adenosyl-L-methionine = a 2-methoxy-6-(all-trans-polyprenyl)phenol + S-adenosyl-L-homocysteine + H(+). The protein operates within cofactor biosynthesis; ubiquinone biosynthesis. Its function is as follows. O-methyltransferase that catalyzes the 2 O-methylation steps in the ubiquinone biosynthetic pathway. The chain is Ubiquinone biosynthesis O-methyltransferase from Xanthomonas campestris pv. campestris (strain 8004).